The chain runs to 286 residues: Putative chaperone BssE (286 aa).

Residues 47 to 54 and 108 to 115 contribute to the ATP site; these read GKQGCGKS and GCVIHLEE.

Belongs to the CbbQ/NirQ/NorQ/GpvN family.

Its function is as follows. May have a role in assembly and/or activation of benzylsuccinate synthase. This Thauera aromatica protein is Putative chaperone BssE (bssE).